Here is a 521-residue protein sequence, read N- to C-terminus: Ribonuclease Y (521 aa).

A helical membrane pass occupies residues 10 to 30; the sequence is LIITAGVSIALAIVAFFLGYL. In terms of domain architecture, KH spans 210–270; the sequence is TVSVVTLPND…IRREIAKLTL (61 aa). The HD domain occupies 336 to 430; it reads VLAHSIEVAN…IQAADSVSAA (95 aa).

This sequence belongs to the RNase Y family.

The protein localises to the cell membrane. In terms of biological role, endoribonuclease that initiates mRNA decay. This chain is Ribonuclease Y, found in Caldicellulosiruptor saccharolyticus (strain ATCC 43494 / DSM 8903 / Tp8T 6331).